Reading from the N-terminus, the 303-residue chain is Uracil phosphoribosyltransferase (303 aa).

Residues Met-1–Ser-86 are unknown. The UPRTase stretch occupies residues Leu-87–Ser-303. Residues Arg-170, Arg-195, and Asp-222–Ser-230 contribute to the 5-phospho-alpha-D-ribose 1-diphosphate site. Residues Ile-285 and Gly-290–Ala-292 contribute to the uracil site. Asp-291 is a binding site for 5-phospho-alpha-D-ribose 1-diphosphate.

Belongs to the UPRTase family. Mg(2+) is required as a cofactor.

It carries out the reaction UMP + diphosphate = 5-phospho-alpha-D-ribose 1-diphosphate + uracil. It participates in pyrimidine metabolism; UMP biosynthesis via salvage pathway; UMP from uracil: step 1/1. Its activity is regulated as follows. Allosterically activated by GTP. Its function is as follows. Catalyzes the conversion of uracil and 5-phospho-alpha-D-ribose 1-diphosphate (PRPP) to UMP and diphosphate. The chain is Uracil phosphoribosyltransferase (upp) from Chlamydia muridarum (strain MoPn / Nigg).